Reading from the N-terminus, the 514-residue chain is Prespore vesicle protein (514 aa).

The first 18 residues, 1–18 (MRLYLLSLILVFYASVSS), serve as a signal peptide directing secretion. Follistatin-like domains are found at residues 40-62 (LCGT…YICR) and 240-262 (TCET…AQCI). Polar residues predominate over residues 285–297 (QRNAKPAQQQRSA). Positions 285–514 (QRNAKPAQQQ…QARPATQKRN (230 aa)) are disordered. Low complexity-rich tracts occupy residues 328–391 (QHNA…HTAA), 398–413 (AAQQ…AKPA), and 424–457 (AAQQ…KPAK). Polar residues predominate over residues 480 to 508 (RIRQQNLVKQAAQKKQTSQRAASKNQARP).

The chain is Prespore vesicle protein (psvA) from Dictyostelium discoideum (Social amoeba).